The primary structure comprises 1249 residues: Pleckstrin homology-like domain family B member 2 (1249 aa).

Disordered stretches follow at residues 64-85 and 128-154; these read QPVS…SPSL and DHYT…SSRN. A phosphoserine mark is found at Ser71 and Ser73. The segment covering 74-84 has biased composition (polar residues); sequence PMGTSVRSSPS. Over residues 128 to 143 the composition is skewed to basic and acidic residues; sequence DHYTGRDSERSTRLSE. Phosphoserine is present on residues Ser156, Ser203, Ser241, and Ser244. Disordered regions lie at residues 190–248 and 264–289; these read SPIS…LSNM and NQMS…GEKD. Positions 231–248 are enriched in polar residues; the sequence is ENVSVRTRKYSGSSLSNM. Residues 267–283 show a composition bias toward low complexity; that stretch reads SPLSLPPRSSLGNSRRG. Phosphoserine occurs at positions 329, 333, 347, 380, 383, 389, 411, 416, 465, 486, and 510. Residues 388 to 424 are disordered; that stretch reads DSDLESLRQSSETPQPVLRERKSSISSISGRDDLMDY. Residues Thr546 and Thr570 each carry the phosphothreonine modification. 2 coiled-coil regions span residues 580–692 and 718–803; these read TQEL…LDNC and FEDL…LCNL. Positions 866 to 934 are disordered; that stretch reads VSQPQSSEHF…LGQSNSCGSV (69 aa). A compositionally biased stretch (basic and acidic residues) spans 873–888; that stretch reads EHFRSLEERKKQHKEG. Position 894 is a phosphothreonine (Thr894). Positions 901–919 are enriched in polar residues; it reads TPSLSPHFSSATMGRSTTP. Residues 1028–1094 are a coiled coil; that stretch reads IARIEEMERL…QKLIEKEVKI (67 aa). Positions 1139-1242 constitute a PH domain; that stretch reads EKTCRGYLIK…WMDVIVTGAE (104 aa).

Interacts with FLNC. Interacts with AMOTL2; interaction may facilitate PHLDB2 localization to the myotube podosome cortex that surrounds the core. Part of a cortical microtubule stabilization complex (CMSC) composed of KANK1, PPFIA1, PPFIBP1, ERC1/ELKS, PHLDB2/LL5beta, CLASPs, KIF21A and possibly additional interactors; within CMSCs KANK1 and PHLDB2/LL5beta appear to be the core components for targeting of microtubule-binding proteins KIF21A and CLASPs, whereas PPFIA1, PPFIBP1 and ERC1/ELKS serve as scaffolds for protein clustering. As to expression, expressed at postsynaptic membranes of skeletal neuromuscular junctions (at protein level).

The protein resides in the cytoplasm. The protein localises to the membrane. It localises to the cell projection. Its subcellular location is the podosome. It is found in the cell cortex. Seems to be involved in the assembly of the postsynaptic apparatus. May play a role in acetyl-choline receptor (AChR) aggregation in the postsynaptic membrane. This is Pleckstrin homology-like domain family B member 2 (Phldb2) from Mus musculus (Mouse).